A 221-amino-acid chain; its full sequence is UPF0758 protein YicR (221 aa).

The MPN domain maps to alanine 99 to isoleucine 221. 3 residues coordinate Zn(2+): histidine 170, histidine 172, and aspartate 183. The short motif at histidine 170–aspartate 183 is the JAMM motif element.

The protein belongs to the UPF0758 family. YicR subfamily.

This Salmonella paratyphi A (strain ATCC 9150 / SARB42) protein is UPF0758 protein YicR.